The following is a 107-amino-acid chain: MTRNIGLKVKEPKRECEDKNCPFHGELAIRGKLFDGKVTGSKAKQTITLQKDAPVYFNKFKRYARGKSSIHAHVPGCIDVESGDNVLTAECRPISKSVSYVVVEVRS.

It belongs to the universal ribosomal protein uS17 family. As to quaternary structure, part of the 30S ribosomal subunit.

Functionally, one of the primary rRNA binding proteins, it binds specifically to the 5'-end of 16S ribosomal RNA. This Nitrosopumilus maritimus (strain SCM1) protein is Small ribosomal subunit protein uS17.